A 538-amino-acid chain; its full sequence is Chaperonin GroEL (538 aa).

Residues 29–32, 86–90, Gly413, 477–479, and Asp493 contribute to the ATP site; these read TLGP, DGTTT, and NAA.

This sequence belongs to the chaperonin (HSP60) family. Forms a cylinder of 14 subunits composed of two heptameric rings stacked back-to-back. Interacts with the co-chaperonin GroES.

It localises to the cytoplasm. It carries out the reaction ATP + H2O + a folded polypeptide = ADP + phosphate + an unfolded polypeptide.. Its function is as follows. Together with its co-chaperonin GroES, plays an essential role in assisting protein folding. The GroEL-GroES system forms a nano-cage that allows encapsulation of the non-native substrate proteins and provides a physical environment optimized to promote and accelerate protein folding. The chain is Chaperonin GroEL from Bifidobacterium adolescentis (strain ATCC 15703 / DSM 20083 / NCTC 11814 / E194a).